We begin with the raw amino-acid sequence, 304 residues long: N-carbamoyl-D-amino acid hydrolase (304 aa).

Residues 5 to 276 enclose the CN hydrolase domain; sequence MILAVGQQGP…DEVITAAVDL (272 aa). Active-site residues include glutamate 47, lysine 127, and cysteine 172.

The enzyme catalyses an N-carbamoyl-D-amino acid + H2O + 2 H(+) = a D-alpha-amino acid + NH4(+) + CO2. The enzyme catalyzes the hydrolysis of N-carbamoyl-D-amino acids to the corresponding which are useful intermediates in the preparation of beta-lactam antibiotics. Industrial production of beta-lactam antibiotics is now being developed using this enzyme. The chain is N-carbamoyl-D-amino acid hydrolase from Agrobacterium sp. (strain KNK712).